A 213-amino-acid chain; its full sequence is Orotate phosphoribosyltransferase (213 aa).

Residue Lys26 participates in 5-phospho-alpha-D-ribose 1-diphosphate binding. 34–35 is a binding site for orotate; sequence FF. Residues 72-73, Arg99, Lys100, Lys103, His105, and 124-132 each bind 5-phospho-alpha-D-ribose 1-diphosphate; these read YK and DDVITAGTA. Orotate-binding residues include Thr128 and Arg156.

This sequence belongs to the purine/pyrimidine phosphoribosyltransferase family. PyrE subfamily. As to quaternary structure, homodimer. Mg(2+) is required as a cofactor.

The catalysed reaction is orotidine 5'-phosphate + diphosphate = orotate + 5-phospho-alpha-D-ribose 1-diphosphate. The protein operates within pyrimidine metabolism; UMP biosynthesis via de novo pathway; UMP from orotate: step 1/2. Its function is as follows. Catalyzes the transfer of a ribosyl phosphate group from 5-phosphoribose 1-diphosphate to orotate, leading to the formation of orotidine monophosphate (OMP). This chain is Orotate phosphoribosyltransferase, found in Yersinia enterocolitica serotype O:8 / biotype 1B (strain NCTC 13174 / 8081).